The sequence spans 354 residues: Glutamine synthetase (354 aa).

In terms of domain architecture, GS beta-grasp spans 22–101; it reads FHAEYVWIDG…VLSETYNNDG (80 aa). One can recognise a GS catalytic domain in the interval 108–354; sequence HRHHTAKVME…IIIETTILDK (247 aa).

Belongs to the glutamine synthetase family. In terms of assembly, homooctamer.

The protein resides in the cytoplasm. The enzyme catalyses L-glutamate + NH4(+) + ATP = L-glutamine + ADP + phosphate + H(+). The sequence is that of Glutamine synthetase (GLN1) from Amanita muscaria (Fly agaric).